We begin with the raw amino-acid sequence, 320 residues long: MALRMIFMGTPEFSVPILNALFDAGHQIVAVYSQPPRPAGRRGLDLTKSPVHQQAEKLGLPVLTPLNFKAQDDRDAFAAHQADVAVVVAYGLLLPEAILTGTRLGCYNGHASLLPRWRGAAPIQRAIMAGDVQTGMMVMKMDKGLDTGPVALTRRVTITPDMTAGELHDALSQIGAEAMVEAMAKLEAGDLPLTAQPEDGVVYATKIDKAETRINFSKPATQVHNDIRGLSPFPGAWFEADINGKLERIKVLSSQMAEVTDTANVPGTVLDDALTIACGLGAVRLVRLQKAGGKPLDAAEFLRGTPIGAGTVFASAKAGT.

112-115 (SLLP) is a (6S)-5,6,7,8-tetrahydrofolate binding site.

Belongs to the Fmt family.

The enzyme catalyses L-methionyl-tRNA(fMet) + (6R)-10-formyltetrahydrofolate = N-formyl-L-methionyl-tRNA(fMet) + (6S)-5,6,7,8-tetrahydrofolate + H(+). Functionally, attaches a formyl group to the free amino group of methionyl-tRNA(fMet). The formyl group appears to play a dual role in the initiator identity of N-formylmethionyl-tRNA by promoting its recognition by IF2 and preventing the misappropriation of this tRNA by the elongation apparatus. The sequence is that of Methionyl-tRNA formyltransferase from Allorhizobium ampelinum (strain ATCC BAA-846 / DSM 112012 / S4) (Agrobacterium vitis (strain S4)).